The primary structure comprises 279 residues: Large ribosomal subunit protein uL2 (279 aa).

2 disordered regions span residues 31–61 and 222–279; these read KSLLEPLTKSGGRNSAGRKTSRHRGGGHKRH and GMAM…RNAK. The segment covering 49–61 has biased composition (basic residues); that stretch reads KTSRHRGGGHKRH. The segment covering 232–242 has biased composition (gly residues); that stretch reads MGGGEGKSKSG. Basic residues predominate over residues 259-268; that stretch reads LKTRNRKKAS.

It belongs to the universal ribosomal protein uL2 family. Part of the 50S ribosomal subunit. Forms a bridge to the 30S subunit in the 70S ribosome.

One of the primary rRNA binding proteins. Required for association of the 30S and 50S subunits to form the 70S ribosome, for tRNA binding and peptide bond formation. It has been suggested to have peptidyltransferase activity; this is somewhat controversial. Makes several contacts with the 16S rRNA in the 70S ribosome. In Chlorobium chlorochromatii (strain CaD3), this protein is Large ribosomal subunit protein uL2.